Here is a 232-residue protein sequence, read N- to C-terminus: Putative N-acetylmannosamine-6-phosphate 2-epimerase (232 aa).

It belongs to the NanE family.

The catalysed reaction is an N-acyl-D-glucosamine 6-phosphate = an N-acyl-D-mannosamine 6-phosphate. It functions in the pathway amino-sugar metabolism; N-acetylneuraminate degradation; D-fructose 6-phosphate from N-acetylneuraminate: step 3/5. Its function is as follows. Converts N-acetylmannosamine-6-phosphate (ManNAc-6-P) to N-acetylglucosamine-6-phosphate (GlcNAc-6-P). The sequence is that of Putative N-acetylmannosamine-6-phosphate 2-epimerase from Borreliella burgdorferi (strain ZS7) (Borrelia burgdorferi).